We begin with the raw amino-acid sequence, 287 residues long: Undecaprenyl-diphosphatase (287 aa).

7 helical membrane passes run Leu-6–Val-26, Ser-45–Phe-65, Asn-89–Lys-109, Val-111–Trp-131, Ala-204–Leu-224, Ala-238–Leu-258, and Tyr-266–Ala-286.

It belongs to the UppP family.

Its subcellular location is the cell inner membrane. It carries out the reaction di-trans,octa-cis-undecaprenyl diphosphate + H2O = di-trans,octa-cis-undecaprenyl phosphate + phosphate + H(+). Its function is as follows. Catalyzes the dephosphorylation of undecaprenyl diphosphate (UPP). Confers resistance to bacitracin. This chain is Undecaprenyl-diphosphatase, found in Bordetella pertussis (strain Tohama I / ATCC BAA-589 / NCTC 13251).